The primary structure comprises 342 residues: Uroporphyrinogen decarboxylase (342 aa).

Substrate contacts are provided by residues 24 to 28 (RQAGR), aspartate 74, tyrosine 149, serine 204, and histidine 319.

This sequence belongs to the uroporphyrinogen decarboxylase family. Homodimer.

Its subcellular location is the cytoplasm. The catalysed reaction is uroporphyrinogen III + 4 H(+) = coproporphyrinogen III + 4 CO2. It participates in porphyrin-containing compound metabolism; protoporphyrin-IX biosynthesis; coproporphyrinogen-III from 5-aminolevulinate: step 4/4. Functionally, catalyzes the decarboxylation of four acetate groups of uroporphyrinogen-III to yield coproporphyrinogen-III. In Chelativorans sp. (strain BNC1), this protein is Uroporphyrinogen decarboxylase.